The chain runs to 153 residues: Aspartate carbamoyltransferase regulatory chain (153 aa).

Zn(2+) contacts are provided by Cys109, Cys114, Cys138, and Cys141.

Belongs to the PyrI family. As to quaternary structure, contains catalytic and regulatory chains. Zn(2+) serves as cofactor.

Functionally, involved in allosteric regulation of aspartate carbamoyltransferase. The protein is Aspartate carbamoyltransferase regulatory chain of Cronobacter sakazakii (strain ATCC BAA-894) (Enterobacter sakazakii).